The primary structure comprises 186 residues: Ribosome-recycling factor (186 aa).

Belongs to the RRF family.

The protein localises to the cytoplasm. In terms of biological role, responsible for the release of ribosomes from messenger RNA at the termination of protein biosynthesis. May increase the efficiency of translation by recycling ribosomes from one round of translation to another. In Polynucleobacter asymbioticus (strain DSM 18221 / CIP 109841 / QLW-P1DMWA-1) (Polynucleobacter necessarius subsp. asymbioticus), this protein is Ribosome-recycling factor.